The primary structure comprises 346 residues: Holliday junction branch migration complex subunit RuvB (346 aa).

The tract at residues 1–182 (MSERLVTSNE…FGVLCSMEYY (182 aa)) is large ATPase domain (RuvB-L). ATP contacts are provided by residues Leu21, Arg22, Gly63, Lys66, Thr67, Thr68, 129–131 (EDY), Arg172, Tyr182, and Arg219. A Mg(2+)-binding site is contributed by Thr67. The small ATPAse domain (RuvB-S) stretch occupies residues 183 to 253 (TDEQLKEIII…AAKKSLEILE (71 aa)). Residues 256 to 346 (GEGFDRIDNK…DSKQCTLFEK (91 aa)) are head domain (RuvB-H). Arg311 and Arg316 together coordinate DNA.

The protein belongs to the RuvB family. As to quaternary structure, homohexamer. Forms an RuvA(8)-RuvB(12)-Holliday junction (HJ) complex. HJ DNA is sandwiched between 2 RuvA tetramers; dsDNA enters through RuvA and exits via RuvB. An RuvB hexamer assembles on each DNA strand where it exits the tetramer. Each RuvB hexamer is contacted by two RuvA subunits (via domain III) on 2 adjacent RuvB subunits; this complex drives branch migration. In the full resolvosome a probable DNA-RuvA(4)-RuvB(12)-RuvC(2) complex forms which resolves the HJ.

Its subcellular location is the cytoplasm. The enzyme catalyses ATP + H2O = ADP + phosphate + H(+). Its function is as follows. The RuvA-RuvB-RuvC complex processes Holliday junction (HJ) DNA during genetic recombination and DNA repair, while the RuvA-RuvB complex plays an important role in the rescue of blocked DNA replication forks via replication fork reversal (RFR). RuvA specifically binds to HJ cruciform DNA, conferring on it an open structure. The RuvB hexamer acts as an ATP-dependent pump, pulling dsDNA into and through the RuvAB complex. RuvB forms 2 homohexamers on either side of HJ DNA bound by 1 or 2 RuvA tetramers; 4 subunits per hexamer contact DNA at a time. Coordinated motions by a converter formed by DNA-disengaged RuvB subunits stimulates ATP hydrolysis and nucleotide exchange. Immobilization of the converter enables RuvB to convert the ATP-contained energy into a lever motion, pulling 2 nucleotides of DNA out of the RuvA tetramer per ATP hydrolyzed, thus driving DNA branch migration. The RuvB motors rotate together with the DNA substrate, which together with the progressing nucleotide cycle form the mechanistic basis for DNA recombination by continuous HJ branch migration. Branch migration allows RuvC to scan DNA until it finds its consensus sequence, where it cleaves and resolves cruciform DNA. The sequence is that of Holliday junction branch migration complex subunit RuvB from Clostridium perfringens (strain ATCC 13124 / DSM 756 / JCM 1290 / NCIMB 6125 / NCTC 8237 / Type A).